The sequence spans 580 residues: uncharacterized protein (580 aa).

The region spanning proline 300 to aspartate 525 is the PE-PPE domain.

Belongs to the mycobacterial PPE family.

This is an uncharacterized protein from Mycobacterium tuberculosis (strain CDC 1551 / Oshkosh).